A 274-amino-acid polypeptide reads, in one-letter code: Large ribosomal subunit protein uL2 (274 aa).

Disordered regions lie at residues Ala28–Gly55 and Val224–Lys274.

The protein belongs to the universal ribosomal protein uL2 family. As to quaternary structure, part of the 50S ribosomal subunit. Forms a bridge to the 30S subunit in the 70S ribosome.

In terms of biological role, one of the primary rRNA binding proteins. Required for association of the 30S and 50S subunits to form the 70S ribosome, for tRNA binding and peptide bond formation. It has been suggested to have peptidyltransferase activity; this is somewhat controversial. Makes several contacts with the 16S rRNA in the 70S ribosome. The chain is Large ribosomal subunit protein uL2 from Pseudomonas putida (strain ATCC 47054 / DSM 6125 / CFBP 8728 / NCIMB 11950 / KT2440).